A 295-amino-acid polypeptide reads, in one-letter code: Small ribosomal subunit protein uS2 (295 aa).

The disordered stretch occupies residues 264–295 (KFSKTKNIDEETNTEFEQALNDTDENKNADNA).

It belongs to the universal ribosomal protein uS2 family.

This is Small ribosomal subunit protein uS2 from Rickettsia akari (strain Hartford).